The sequence spans 137 residues: MRTLLIVAVLLVGVEGSVYELGKMILQETGKNAATSYGFYGCNCGVGRRGKPKDATDRCCFVHKCCYKKLTDCNSKTDRYSYSWKDKTIVCGDNNPCLQEMCECDKAVAICLRENLNTYNKKYKIHMKFFCKKPDAC.

The first 16 residues, 1-16 (MRTLLIVAVLLVGVEG), serve as a signal peptide directing secretion. 7 disulfide bridges follow: C42-C131, C44-C60, C59-C111, C65-C137, C66-C104, C73-C97, and C91-C102. The tract at residues 121-133 (KKYKIHMKFFCKK) is important for membrane-damaging activities in eukaryotes and bacteria; heparin-binding.

As to expression, expressed by the venom gland.

It localises to the secreted. Its function is as follows. Snake venom phospholipase A2 homolog that lacks enzymatic activity. Is myotoxic. A model of myotoxic mechanism has been proposed: an apo Lys49-PLA2 is activated by the entrance of a hydrophobic molecule (e.g. fatty acid) at the hydrophobic channel of the protein leading to a reorientation of a monomer. This reorientation causes a transition between 'inactive' to 'active' states, causing alignment of C-terminal and membrane-docking sites (MDoS) side-by-side and putting the membrane-disruption sites (MDiS) in the same plane, exposed to solvent and in a symmetric position for both monomers. The MDoS region stabilizes the toxin on membrane by the interaction of charged residues with phospholipid head groups. Subsequently, the MDiS region destabilizes the membrane with penetration of hydrophobic residues. This insertion causes a disorganization of the membrane, allowing an uncontrolled influx of ions (i.e. calcium and sodium), and eventually triggering irreversible intracellular alterations and cell death. This chain is Basic phospholipase A2 homolog Pgo-K49, found in Cerrophidion godmani (Porthidium godmani).